A 136-amino-acid chain; its full sequence is Large ribosomal subunit protein bL21 (136 aa).

The protein belongs to the bacterial ribosomal protein bL21 family. Part of the 50S ribosomal subunit. Contacts protein L20.

This protein binds to 23S rRNA in the presence of protein L20. The protein is Large ribosomal subunit protein bL21 of Gloeothece citriformis (strain PCC 7424) (Cyanothece sp. (strain PCC 7424)).